The following is a 348-amino-acid chain: Chlorophyll(ide) b reductase NOL, chloroplastic (348 aa).

A chloroplast-targeting transit peptide spans 1–61; that stretch reads MATWSGFNVS…TRQNLTVTPS (61 aa). 84–108 serves as a coordination point for NAD(+); it reads ITGSTKGIGYALAREFLKAGDNVVI. Tyr-233 acts as the Proton acceptor in catalysis.

This sequence belongs to the short-chain dehydrogenases/reductases (SDR) family. As to quaternary structure, interacts with NCY1 to form a complex that acts as a chlorophyll b reductase. Interacts with HCAR, RCCR and the LHCII complex. Part of a SGR1-CCE-LHCII complex, which acts in chlorophyll breakdown.

The protein localises to the plastid. It localises to the chloroplast thylakoid membrane. It carries out the reaction 7(1)-hydroxychlorophyllide a + NAD(+) = chlorophyllide b + NADH + H(+). The enzyme catalyses 7(1)-hydroxychlorophyllide a + NADP(+) = chlorophyllide b + NADPH + H(+). Its function is as follows. Required for chlorophyll b degradation. Chlorophyll b, chlorophyllide b, pheophorbide b and pheophytin b can be used as substrates. Belongs to the chlorophyll catabolic enzymes (CCEs). In Arabidopsis thaliana (Mouse-ear cress), this protein is Chlorophyll(ide) b reductase NOL, chloroplastic (NOL).